Here is a 455-residue protein sequence, read N- to C-terminus: Golgi pH regulator A (455 aa).

The next 5 membrane-spanning stretches (helical) occupy residues 5–25, 46–66, 79–99, 114–134, and 150–170; these read IDSSIMITSQILFFGFGWLFF, VTFAFSCTMFELIIFEILGVL, LCVILLILVFMVPFYIGYFIV, CLLWLTFMYFFWKLGDPFPIL, and VGVIGVTLMALLSGFGAVNCP. Asn180 and Asn243 each carry an N-linked (GlcNAc...) asparagine glycan. A run of 4 helical transmembrane segments spans residues 290-310, 343-363, 378-398, and 425-445; these read GYFFSIYCVWKIFMATINIVF, ISFILVGIIIVTSIRGLLITL, VIVLLLAQIMGMYFVSSVLLI, and WFDVIFLVSALSSILFLYLAH.

The protein belongs to the Golgi pH regulator (TC 1.A.38) family. As to quaternary structure, homotrimer. Interacts with RABL3; the interaction stabilizes GPR89A. Ubiquitous.

The protein localises to the golgi apparatus membrane. The enzyme catalyses iodide(out) = iodide(in). It carries out the reaction chloride(in) = chloride(out). The catalysed reaction is bromide(in) = bromide(out). It catalyses the reaction fluoride(in) = fluoride(out). In terms of biological role, voltage-gated channel that enables the transfer of monoatomic anions such as iodide, chloride, bromide and fluoride which may function in counter-ion conductance and participates in Golgi acidification. Plays a role in lymphocyte development, probably by acting as a RABL3 effector in hematopoietic cells. The sequence is that of Golgi pH regulator A from Homo sapiens (Human).